The following is a 120-amino-acid chain: NAD(P)H-quinone oxidoreductase subunit 3, chloroplastic (120 aa).

Transmembrane regions (helical) follow at residues 9-29 (IFWA…LISG), 64-84 (MFAL…PWAM), and 88-108 (VLGV…IVGS).

This sequence belongs to the complex I subunit 3 family. As to quaternary structure, NDH is composed of at least 16 different subunits, 5 of which are encoded in the nucleus.

The protein localises to the plastid. The protein resides in the chloroplast thylakoid membrane. The enzyme catalyses a plastoquinone + NADH + (n+1) H(+)(in) = a plastoquinol + NAD(+) + n H(+)(out). It carries out the reaction a plastoquinone + NADPH + (n+1) H(+)(in) = a plastoquinol + NADP(+) + n H(+)(out). Its function is as follows. NDH shuttles electrons from NAD(P)H:plastoquinone, via FMN and iron-sulfur (Fe-S) centers, to quinones in the photosynthetic chain and possibly in a chloroplast respiratory chain. The immediate electron acceptor for the enzyme in this species is believed to be plastoquinone. Couples the redox reaction to proton translocation, and thus conserves the redox energy in a proton gradient. The polypeptide is NAD(P)H-quinone oxidoreductase subunit 3, chloroplastic (Buxus microphylla (Littleleaf boxwood)).